The following is a 433-amino-acid chain: GTPase Der (433 aa).

2 EngA-type G domains span residues 5–167 and 174–349; these read KKVL…GEAN and IKVG…DQLE. GTP-binding positions include 11 to 18, 58 to 62, 119 to 122, 180 to 187, 227 to 231, and 292 to 295; these read GRPNVGKS, DTGGF, NKVD, GKPNSGKS, DTAGI, and SKWD. Positions 350 to 429 constitute a KH-like domain; sequence FKTSTPDLNK…PILVELREKI (80 aa).

The protein belongs to the TRAFAC class TrmE-Era-EngA-EngB-Septin-like GTPase superfamily. EngA (Der) GTPase family. Associates with the 50S ribosomal subunit.

Its function is as follows. GTPase that plays an essential role in the late steps of ribosome biogenesis. The protein is GTPase Der of Borreliella afzelii (strain PKo) (Borrelia afzelii).